A 495-amino-acid polypeptide reads, in one-letter code: Probable cytosol aminopeptidase (495 aa).

Mn(2+) contacts are provided by lysine 267 and aspartate 272. Lysine 279 is an active-site residue. 3 residues coordinate Mn(2+): aspartate 290, aspartate 349, and glutamate 351. The active site involves arginine 353.

This sequence belongs to the peptidase M17 family. Requires Mn(2+) as cofactor.

The protein resides in the cytoplasm. It catalyses the reaction Release of an N-terminal amino acid, Xaa-|-Yaa-, in which Xaa is preferably Leu, but may be other amino acids including Pro although not Arg or Lys, and Yaa may be Pro. Amino acid amides and methyl esters are also readily hydrolyzed, but rates on arylamides are exceedingly low.. The catalysed reaction is Release of an N-terminal amino acid, preferentially leucine, but not glutamic or aspartic acids.. In terms of biological role, presumably involved in the processing and regular turnover of intracellular proteins. Catalyzes the removal of unsubstituted N-terminal amino acids from various peptides. This chain is Probable cytosol aminopeptidase, found in Histophilus somni (strain 129Pt) (Haemophilus somnus).